A 531-amino-acid chain; its full sequence is O-phosphoserine--tRNA(Cys) ligase (531 aa).

Substrate is bound by residues histidine 189–threonine 191, serine 234–serine 236, tyrosine 276–tyrosine 277, and asparagine 319.

It belongs to the class-II aminoacyl-tRNA synthetase family. O-phosphoseryl-tRNA(Cys) synthetase subfamily. As to quaternary structure, homotetramer. Interacts with SepCysS.

It carries out the reaction tRNA(Cys) + O-phospho-L-serine + ATP = O-phospho-L-seryl-tRNA(Cys) + AMP + diphosphate. Its function is as follows. Catalyzes the attachment of O-phosphoserine (Sep) to tRNA(Cys). This Methanoculleus marisnigri (strain ATCC 35101 / DSM 1498 / JR1) protein is O-phosphoserine--tRNA(Cys) ligase.